An 865-amino-acid chain; its full sequence is Cadherin-related family member 1 (865 aa).

The first 23 residues, 1–23 (MKHVRHFIPSLFLSLVHVCLVQA), serve as a signal peptide directing secretion. Topologically, residues 24–705 (NYAPYFFDNG…TKDNPMKALG (682 aa)) are extracellular. 6 consecutive Cadherin domains span residues 38–137 (NGNM…SPEF), 138–249 (INTP…PPMF), 250–356 (IGTP…PPTF), 362–475 (PQNR…VPKF), 476–579 (SSDY…SPEF), and 571–690 (DVND…GPMA). The helical transmembrane segment at 706–726 (VLAGVMGIMVLITIMISTAMF) threads the bilayer. The Cytoplasmic portion of the chain corresponds to 727–865 (WRNKRSNKIM…RNASMGEPHI (139 aa)). The segment at 782–810 (ENSNNNVQAAPVPPAAPLPPPPPALAASG) is disordered. Over residues 792–805 (PVPPAAPLPPPPPA) the composition is skewed to pro residues.

The protein localises to the membrane. Its function is as follows. Potential calcium-dependent cell-adhesion protein. This is Cadherin-related family member 1 (CDHR1) from Gallus gallus (Chicken).